Here is a 241-residue protein sequence, read N- to C-terminus: Adenosylcobinamide-GDP ribazoletransferase (241 aa).

The next 7 membrane-spanning stretches (helical) occupy residues 34-54 (RIPA…FTGS), 55-75 (FLSL…GFYL), 109-129 (VGPF…ELIT), 133-153 (PVAF…VLVF), 165-185 (MLFP…LPLL), 186-206 (LIDV…GFLI), and 221-241 (VLGG…NYLI).

This sequence belongs to the CobS family. Mg(2+) serves as cofactor.

The protein localises to the cell inner membrane. It carries out the reaction alpha-ribazole + adenosylcob(III)inamide-GDP = adenosylcob(III)alamin + GMP + H(+). The catalysed reaction is alpha-ribazole 5'-phosphate + adenosylcob(III)inamide-GDP = adenosylcob(III)alamin 5'-phosphate + GMP + H(+). It participates in cofactor biosynthesis; adenosylcobalamin biosynthesis; adenosylcobalamin from cob(II)yrinate a,c-diamide: step 7/7. Joins adenosylcobinamide-GDP and alpha-ribazole to generate adenosylcobalamin (Ado-cobalamin). Also synthesizes adenosylcobalamin 5'-phosphate from adenosylcobinamide-GDP and alpha-ribazole 5'-phosphate. This is Adenosylcobinamide-GDP ribazoletransferase from Fervidobacterium nodosum (strain ATCC 35602 / DSM 5306 / Rt17-B1).